The chain runs to 362 residues: DNA polymerase IV (362 aa).

Residues 6–187 enclose the UmuC domain; the sequence is IIHVDMDAFY…LPVSSFHGVG (182 aa). Residues Asp10 and Asp105 each coordinate Mg(2+). The active site involves Glu106.

It belongs to the DNA polymerase type-Y family. As to quaternary structure, monomer. Requires Mg(2+) as cofactor.

The protein resides in the cytoplasm. It catalyses the reaction DNA(n) + a 2'-deoxyribonucleoside 5'-triphosphate = DNA(n+1) + diphosphate. Its function is as follows. Poorly processive, error-prone DNA polymerase involved in untargeted mutagenesis. Copies undamaged DNA at stalled replication forks, which arise in vivo from mismatched or misaligned primer ends. These misaligned primers can be extended by PolIV. Exhibits no 3'-5' exonuclease (proofreading) activity. May be involved in translesional synthesis, in conjunction with the beta clamp from PolIII. The polypeptide is DNA polymerase IV (Leptospira interrogans serogroup Icterohaemorrhagiae serovar Lai (strain 56601)).